The chain runs to 305 residues: N-acetyl-D-glucosamine kinase (305 aa).

ATP-binding positions include 4-11 (GFDIGGTK) and 133-140 (GFGGGLVF). Residues His157, Cys178, Cys180, and Cys185 each contribute to the Zn(2+) site.

Belongs to the ROK (NagC/XylR) family. NagK subfamily.

It carries out the reaction N-acetyl-D-glucosamine + ATP = N-acetyl-D-glucosamine 6-phosphate + ADP + H(+). The protein operates within cell wall biogenesis; peptidoglycan recycling. Catalyzes the phosphorylation of N-acetyl-D-glucosamine (GlcNAc) derived from cell-wall degradation, yielding GlcNAc-6-P. The chain is N-acetyl-D-glucosamine kinase from Histophilus somni (strain 129Pt) (Haemophilus somnus).